A 268-amino-acid polypeptide reads, in one-letter code: Tryptophan synthase alpha chain (268 aa).

Catalysis depends on proton acceptor residues E49 and D60.

It belongs to the TrpA family. As to quaternary structure, tetramer of two alpha and two beta chains.

It catalyses the reaction (1S,2R)-1-C-(indol-3-yl)glycerol 3-phosphate + L-serine = D-glyceraldehyde 3-phosphate + L-tryptophan + H2O. The protein operates within amino-acid biosynthesis; L-tryptophan biosynthesis; L-tryptophan from chorismate: step 5/5. Its function is as follows. The alpha subunit is responsible for the aldol cleavage of indoleglycerol phosphate to indole and glyceraldehyde 3-phosphate. In Yersinia pestis bv. Antiqua (strain Antiqua), this protein is Tryptophan synthase alpha chain.